A 144-amino-acid polypeptide reads, in one-letter code: UPF0102 protein BMA2801 (144 aa).

The disordered stretch occupies residues 1–28 (MCHAREASPGTGEPEAAPRDNFPRAAGS).

It belongs to the UPF0102 family.

The polypeptide is UPF0102 protein BMA2801 (Burkholderia mallei (strain ATCC 23344)).